A 530-amino-acid chain; its full sequence is Polyprotein pp62 (530 aa).

Belongs to the asfivirus polyprotein pp62 family. As to quaternary structure, monomer. Predominantly exists as a monomer, with very little dimers. Homodimerization seems to be linked to low pH. In terms of assembly, homodimer; disulfide-linked. Homotrimer; disulfide-linked. Homohexamer. In terms of processing, monoubiquitinated in vitro by viral UBCv1. Specific enzymatic cleavages in vivo yield mature proteins.

It localises to the host cytoplasm. The protein localises to the host perinuclear region. Its subcellular location is the virion. Functionally, essential for the correct assembly and maturation of the core of the virion. Its function is as follows. Component of the core shell. Binds to phosphatidylserine, which may enable the core shell binding with the inner membrane. In terms of biological role, component of the core shell. Binds to phosphatidylserine and DNA, which may link the core shell to the inner membrane and to the viral nucleoid. Component of the core shell. This Ornithodoros (relapsing fever ticks) protein is Polyprotein pp62.